A 316-amino-acid chain; its full sequence is Ferrochelatase (316 aa).

Residues H188 and E269 each contribute to the Fe cation site.

Belongs to the ferrochelatase family.

It is found in the cytoplasm. It catalyses the reaction heme b + 2 H(+) = protoporphyrin IX + Fe(2+). It participates in porphyrin-containing compound metabolism; protoheme biosynthesis; protoheme from protoporphyrin-IX: step 1/1. Catalyzes the ferrous insertion into protoporphyrin IX. This is Ferrochelatase from Wolinella succinogenes (strain ATCC 29543 / DSM 1740 / CCUG 13145 / JCM 31913 / LMG 7466 / NCTC 11488 / FDC 602W) (Vibrio succinogenes).